Reading from the N-terminus, the 165-residue chain is Nucleotide-binding protein Ccon26_01810 (165 aa).

It belongs to the YajQ family.

In terms of biological role, nucleotide-binding protein. This is Nucleotide-binding protein Ccon26_01810 from Campylobacter concisus (strain 13826).